A 199-amino-acid chain; its full sequence is Peroxiredoxin-1 (199 aa).

Residue serine 2 is modified to N-acetylserine. Residues 6-165 form the Thioredoxin domain; sequence AKIGYPAPNF…IIRLVQAFQF (160 aa). An N6-acetyllysine; alternate modification is found at lysine 7. A Glycyl lysine isopeptide (Lys-Gly) (interchain with G-Cter in SUMO2); alternate cross-link involves residue lysine 7. 2 positions are modified to N6-acetyllysine: lysine 16 and lysine 27. Serine 32 carries the phosphoserine modification. Lysine 35 carries the N6-acetyllysine; alternate modification. At lysine 35 the chain carries N6-succinyllysine; alternate. The active-site Cysteine sulfenic acid (-SOH) intermediate is cysteine 52. Phosphothreonine is present on threonine 90. Lysine 120 is covalently cross-linked (Glycyl lysine isopeptide (Lys-Gly) (interchain with G-Cter in SUMO2)). Position 136 is an N6-acetyllysine (lysine 136). Residue lysine 185 forms a Glycyl lysine isopeptide (Lys-Gly) (interchain with G-Cter in SUMO1) linkage. Position 197 is an N6-acetyllysine (lysine 197).

It belongs to the peroxiredoxin family. AhpC/Prx1 subfamily. Homodimer; disulfide-linked, upon oxidation. 5 homodimers assemble to form a ring-like decamer. Interacts with GDPD5; forms a mixed-disulfide with GDPD5. Interacts with SESN1 and SESN2. Interacts with FAM107A. Post-translationally, phosphorylated on Thr-90 during the M-phase, which leads to a decrease in enzymatic activity. Acetylation increases reducing activity and resistance to superoxidation. Deacetylated by HDAC6 which decreases reducing activity. Found in various tissues; high concentration in liver.

It is found in the cytoplasm. It catalyses the reaction a hydroperoxide + [thioredoxin]-dithiol = an alcohol + [thioredoxin]-disulfide + H2O. In terms of biological role, thiol-specific peroxidase that catalyzes the reduction of hydrogen peroxide and organic hydroperoxides to water and alcohols, respectively. Plays a role in cell protection against oxidative stress by detoxifying peroxides and as sensor of hydrogen peroxide-mediated signaling events. Might participate in the signaling cascades of growth factors and tumor necrosis factor-alpha by regulating the intracellular concentrations of H(2)O(2). Reduces an intramolecular disulfide bond in GDPD5 that gates the ability to GDPD5 to drive postmitotic motor neuron differentiation. This Mus musculus (Mouse) protein is Peroxiredoxin-1 (Prdx1).